Consider the following 352-residue polypeptide: Quinolinate synthase (352 aa).

Residues histidine 48 and serine 69 each coordinate iminosuccinate. Cysteine 114 lines the [4Fe-4S] cluster pocket. Iminosuccinate-binding positions include 140–142 (YAN) and serine 157. Cysteine 201 lines the [4Fe-4S] cluster pocket. Iminosuccinate is bound by residues 227–229 (HPE) and threonine 244. Residue cysteine 298 coordinates [4Fe-4S] cluster.

This sequence belongs to the quinolinate synthase family. Type 1 subfamily. [4Fe-4S] cluster serves as cofactor.

The protein localises to the cytoplasm. It catalyses the reaction iminosuccinate + dihydroxyacetone phosphate = quinolinate + phosphate + 2 H2O + H(+). It functions in the pathway cofactor biosynthesis; NAD(+) biosynthesis; quinolinate from iminoaspartate: step 1/1. Catalyzes the condensation of iminoaspartate with dihydroxyacetone phosphate to form quinolinate. This Pseudomonas putida (strain GB-1) protein is Quinolinate synthase.